The chain runs to 252 residues: Imidazole glycerol phosphate synthase subunit HisF (252 aa).

Residues Asp11 and Asp130 contribute to the active site.

The protein belongs to the HisA/HisF family. As to quaternary structure, heterodimer of HisH and HisF.

It is found in the cytoplasm. It catalyses the reaction 5-[(5-phospho-1-deoxy-D-ribulos-1-ylimino)methylamino]-1-(5-phospho-beta-D-ribosyl)imidazole-4-carboxamide + L-glutamine = D-erythro-1-(imidazol-4-yl)glycerol 3-phosphate + 5-amino-1-(5-phospho-beta-D-ribosyl)imidazole-4-carboxamide + L-glutamate + H(+). Its pathway is amino-acid biosynthesis; L-histidine biosynthesis; L-histidine from 5-phospho-alpha-D-ribose 1-diphosphate: step 5/9. Its function is as follows. IGPS catalyzes the conversion of PRFAR and glutamine to IGP, AICAR and glutamate. The HisF subunit catalyzes the cyclization activity that produces IGP and AICAR from PRFAR using the ammonia provided by the HisH subunit. The protein is Imidazole glycerol phosphate synthase subunit HisF of Streptococcus sanguinis (strain SK36).